Reading from the N-terminus, the 759-residue chain is 5-methyltetrahydropteroyltriglutamate--homocysteine methyltransferase (759 aa).

5-methyltetrahydropteroyltri-L-glutamate contacts are provided by residues 17–20 (RELK) and Lys116. L-homocysteine-binding positions include 430–432 (IGS) and Glu483. Residues 430 to 432 (IGS) and Glu483 contribute to the L-methionine site. Residues 514–515 (RC) and Trp560 each bind 5-methyltetrahydropteroyltri-L-glutamate. Asp598 lines the L-homocysteine pocket. L-methionine is bound at residue Asp598. A 5-methyltetrahydropteroyltri-L-glutamate-binding site is contributed by Glu604. The Zn(2+) site is built by His641, Cys643, and Glu665. The active-site Proton donor is His694. Cys726 lines the Zn(2+) pocket.

The protein belongs to the vitamin-B12 independent methionine synthase family. The cofactor is Zn(2+).

It catalyses the reaction 5-methyltetrahydropteroyltri-L-glutamate + L-homocysteine = tetrahydropteroyltri-L-glutamate + L-methionine. Its pathway is amino-acid biosynthesis; L-methionine biosynthesis via de novo pathway; L-methionine from L-homocysteine (MetE route): step 1/1. Its function is as follows. Catalyzes the transfer of a methyl group from 5-methyltetrahydrofolate to homocysteine resulting in methionine formation. The polypeptide is 5-methyltetrahydropteroyltriglutamate--homocysteine methyltransferase (Lactococcus lactis subsp. lactis (strain IL1403) (Streptococcus lactis)).